A 217-amino-acid chain; its full sequence is Translation initiation factor IF-3 (217 aa).

A disordered region spans residues 185 to 217 (YNLPETETTRIREENREKQKEKENTSKEGNKDA). Over residues 191–217 (ETTRIREENREKQKEKENTSKEGNKDA) the composition is skewed to basic and acidic residues.

The protein belongs to the IF-3 family. Monomer.

It localises to the cytoplasm. IF-3 binds to the 30S ribosomal subunit and shifts the equilibrium between 70S ribosomes and their 50S and 30S subunits in favor of the free subunits, thus enhancing the availability of 30S subunits on which protein synthesis initiation begins. This is Translation initiation factor IF-3 from Methylacidiphilum infernorum (isolate V4) (Methylokorus infernorum (strain V4)).